The chain runs to 132 residues: Small ribosomal subunit protein uS13 (132 aa).

The segment at 106–132 is disordered; that stretch reads PVRGQVTQKNARTRKGPRKTVAGKKGK. The segment covering 116–132 has biased composition (basic residues); that stretch reads ARTRKGPRKTVAGKKGK.

This sequence belongs to the universal ribosomal protein uS13 family. As to quaternary structure, part of the 30S ribosomal subunit. Forms a loose heterodimer with protein S19. Forms two bridges to the 50S subunit in the 70S ribosome.

In terms of biological role, located at the top of the head of the 30S subunit, it contacts several helices of the 16S rRNA. In the 70S ribosome it contacts the 23S rRNA (bridge B1a) and protein L5 of the 50S subunit (bridge B1b), connecting the 2 subunits; these bridges are implicated in subunit movement. Contacts the tRNAs in the A and P-sites. The polypeptide is Small ribosomal subunit protein uS13 (Mycoplasmopsis pulmonis (strain UAB CTIP) (Mycoplasma pulmonis)).